A 245-amino-acid polypeptide reads, in one-letter code: 1-(5-phosphoribosyl)-5-[(5-phosphoribosylamino)methylideneamino] imidazole-4-carboxamide isomerase (245 aa).

The Proton acceptor role is filled by Asp-7. Residue Asp-129 is the Proton donor of the active site.

It belongs to the HisA/HisF family.

It localises to the cytoplasm. The catalysed reaction is 1-(5-phospho-beta-D-ribosyl)-5-[(5-phospho-beta-D-ribosylamino)methylideneamino]imidazole-4-carboxamide = 5-[(5-phospho-1-deoxy-D-ribulos-1-ylimino)methylamino]-1-(5-phospho-beta-D-ribosyl)imidazole-4-carboxamide. The protein operates within amino-acid biosynthesis; L-histidine biosynthesis; L-histidine from 5-phospho-alpha-D-ribose 1-diphosphate: step 4/9. In Escherichia coli (strain 55989 / EAEC), this protein is 1-(5-phosphoribosyl)-5-[(5-phosphoribosylamino)methylideneamino] imidazole-4-carboxamide isomerase.